The following is a 476-amino-acid chain: Protein PAL OF QUIRKY (476 aa).

An N-terminal signal peptide occupies residues 1-14 (MTTVSSAFATVAEG). Residues 204–256 (TRRTNSGTSGSGDGNGGICGQESMMLETNSSFGSTSSSVSSSNLPPIKSSGED) form a disordered region. Residues 212–222 (SGSGDGNGGIC) are compositionally biased toward gly residues. A compositionally biased stretch (low complexity) spans 233-252 (SSFGSTSSSVSSSNLPPIKS).

In terms of assembly, homodimer. Interacts with QKY and SUB/SCM at the plasma membrane. As to expression, observed in seedlings, roots, shoots, leaves, stems, inflorescence and flowers.

The protein localises to the cell membrane. It is found in the endomembrane system. Functionally, collaboratively with SUB and QKY, regulates cell growth anisotropy during gynoecium development, thus linking together cell-cell communication and cellular growth. The chain is Protein PAL OF QUIRKY from Arabidopsis thaliana (Mouse-ear cress).